The primary structure comprises 295 residues: GTPase Era (295 aa).

Residues 3–170 (KSGFVTIVGR…VDLMKTELPE (168 aa)) enclose the Era-type G domain. Residues 11–18 (GRPNVGKS) are G1. 11–18 (GRPNVGKS) serves as a coordination point for GTP. Residues 37–41 (QTTRN) form a G2 region. Residues 58-61 (DTPG) form a G3 region. Residues 58-62 (DTPGI) and 120-123 (NKID) each bind GTP. Positions 120–123 (NKID) are G4. Positions 149 to 151 (IAA) are G5. In terms of domain architecture, KH type-2 spans 201–278 (LRDEVPHGIA…NVKIWVKVRK (78 aa)).

The protein belongs to the TRAFAC class TrmE-Era-EngA-EngB-Septin-like GTPase superfamily. Era GTPase family. Monomer.

It is found in the cytoplasm. The protein resides in the cell membrane. Functionally, an essential GTPase that binds both GDP and GTP, with rapid nucleotide exchange. Plays a role in 16S rRNA processing and 30S ribosomal subunit biogenesis and possibly also in cell cycle regulation and energy metabolism. The protein is GTPase Era of Clostridium botulinum (strain Eklund 17B / Type B).